Consider the following 167-residue polypeptide: Minor fimbrial protein PrsF (167 aa).

Positions M1 to L18 are cleaved as a signal peptide.

It localises to the secreted. It is found in the fimbrium. In terms of biological role, fimbriae (also called pili), polar filaments radiating from the surface of the bacterium to a length of 0.5-1.5 micrometers and numbering 100-300 per cell, enable bacteria to colonize the epithelium of specific host organs. This is Minor fimbrial protein PrsF (prsF) from Escherichia coli.